Consider the following 1750-residue polypeptide: Brefeldin A-inhibited guanine nucleotide-exchange protein 3 (1750 aa).

Residue A2 is modified to N-acetylalanine. Disordered regions lie at residues L44–P65 and E565–N596. The segment covering P47–S61 has biased composition (polar residues). Over residues E565 to S588 the composition is skewed to basic and acidic residues. The residue at position 586 (S586) is a Phosphoserine. The region spanning A601–N788 is the SEC7 domain. Residue E703 is part of the active site. S1307 carries the phosphoserine modification.

In terms of assembly, homodimer.

The protein resides in the cytoplasm. Its subcellular location is the cytosol. It is found in the membrane. Its activity is regulated as follows. Inhibited by brefeldin A. In terms of biological role, activates the ARF proteins by exchanging bound GDP for free GTP. Plays a role in vesicular protein sorting. Involved both in the nuclear division phase and in the nuclear fusion phase. In Arabidopsis thaliana (Mouse-ear cress), this protein is Brefeldin A-inhibited guanine nucleotide-exchange protein 3 (BIG3).